We begin with the raw amino-acid sequence, 210 residues long: Cytochrome c biogenesis ATP-binding export protein CcmA (210 aa).

In terms of domain architecture, ABC transporter spans 3 to 209; it reads LTVTNLACAR…PADDPFAGVT (207 aa). 35–42 is an ATP binding site; the sequence is GPNGIGKT.

This sequence belongs to the ABC transporter superfamily. CcmA exporter (TC 3.A.1.107) family. In terms of assembly, the complex is composed of two ATP-binding proteins (CcmA) and two transmembrane proteins (CcmB).

The protein resides in the cell inner membrane. It carries out the reaction heme b(in) + ATP + H2O = heme b(out) + ADP + phosphate + H(+). Functionally, part of the ABC transporter complex CcmAB involved in the biogenesis of c-type cytochromes; once thought to export heme, this seems not to be the case, but its exact role is uncertain. Responsible for energy coupling to the transport system. The protein is Cytochrome c biogenesis ATP-binding export protein CcmA of Cereibacter sphaeroides (strain ATCC 17023 / DSM 158 / JCM 6121 / CCUG 31486 / LMG 2827 / NBRC 12203 / NCIMB 8253 / ATH 2.4.1.) (Rhodobacter sphaeroides).